The following is a 181-amino-acid chain: Copper-resistant cuproprotein CopI (181 aa).

The N-terminal stretch at 1–24 is a signal peptide; the sequence is MFPRRLLPASLIVLGVLFGASAQA. 4 residues coordinate Cu(2+): H79, C163, H168, and M173.

It belongs to the CopI family.

It localises to the periplasm. Functionally, involved in copper tolerance. In Pseudomonas aeruginosa (strain ATCC 15692 / DSM 22644 / CIP 104116 / JCM 14847 / LMG 12228 / 1C / PRS 101 / PAO1), this protein is Copper-resistant cuproprotein CopI.